Here is a 642-residue protein sequence, read N- to C-terminus: Probable malate:quinone oxidoreductase (642 aa).

A unknown region spans residues 1 to 142; the sequence is MIVVFRHEST…TTRGDKRKLN (142 aa). The interval 143–642 is MQO domain; that stretch reads MSDSPKNAQK…TQKTLKLEKA (500 aa).

It in the C-terminal section; belongs to the MQO family. The cofactor is FAD.

It carries out the reaction (S)-malate + a quinone = a quinol + oxaloacetate. The protein operates within carbohydrate metabolism; tricarboxylic acid cycle; oxaloacetate from (S)-malate (quinone route): step 1/1. This chain is Probable malate:quinone oxidoreductase (mqo), found in Corynebacterium efficiens (strain DSM 44549 / YS-314 / AJ 12310 / JCM 11189 / NBRC 100395).